The primary structure comprises 117 residues: Large ribosomal subunit protein uL24 (117 aa).

It belongs to the universal ribosomal protein uL24 family. Part of the 50S ribosomal subunit.

Functionally, one of two assembly initiator proteins, it binds directly to the 5'-end of the 23S rRNA, where it nucleates assembly of the 50S subunit. In terms of biological role, one of the proteins that surrounds the polypeptide exit tunnel on the outside of the subunit. This Thermosynechococcus vestitus (strain NIES-2133 / IAM M-273 / BP-1) protein is Large ribosomal subunit protein uL24.